Here is a 310-residue protein sequence, read N- to C-terminus: MPLLVEGRRVRLPQSAGDLVRAHPPLEERARLLRGQSVQQVGPQGLLYVQQRELAVTSPKDGSISILGSDDATTCHIVVLRHTGNGATCLTHCDGTDTKAEVPLIMNSIKSFSDHAQCGRLEVHLVGGFSDDRQLSQKLTHQLLSEFDRQEDDIHLVTLCVTELNDREENENHFPVIYGIAVNIKTAEIYRASFQDRGPEEQLRAARTLAGGPMISIYDAETEQLRIGPYSWTPFPHVDFWLHQDDKQILENLSTSPLAEPPHFVEHIRSTLMFLKKHPSPAHTLFSGNKALLYKKNEDGLWEKISSPGS.

Monomer.

Its subcellular location is the cytoplasm. The enzyme catalyses N-terminal L-asparaginyl-[protein] + H2O + H(+) = N-terminal L-aspartyl-[protein] + NH4(+). Inhibited by micromolar concentrations of copper and zinc ions. Its function is as follows. N-terminal asparagine deamidase that mediates deamidation of N-terminal asparagine residues to aspartate. Required for the ubiquitin-dependent turnover of intracellular proteins that initiate with Met-Asn. These proteins are acetylated on the retained initiator methionine and can subsequently be modified by the removal of N-acetyl methionine by acylaminoacid hydrolase (AAH). Conversion of the resulting N-terminal asparagine to aspartate by NTAN1/PNAD renders the protein susceptible to arginylation, polyubiquitination and degradation as specified by the N-end rule. This enzyme does not act on substrates with internal or C-terminal asparagines and does not act on glutamine residues in any position, nor on acetylated N-terminal peptidyl Asn. The sequence is that of Protein N-terminal asparagine amidohydrolase (NTAN1) from Homo sapiens (Human).